Consider the following 300-residue polypeptide: Protein MoxJ (300 aa).

Residues 1–25 form the signal peptide; the sequence is MSLVNGRRRTAASVVALTAALTALA.

The protein localises to the periplasm. Its function is as follows. May be involved in the assemblage of active methanol dehydrogenase and/or its cofactor PQQ in the periplasm. The protein is Protein MoxJ (moxJ) of Methylorubrum extorquens (strain ATCC 14718 / DSM 1338 / JCM 2805 / NCIMB 9133 / AM1) (Methylobacterium extorquens).